Consider the following 380-residue polypeptide: Anthranilate phosphoribosyltransferase (380 aa).

Residues Gly-109, Asn-119, Ser-121, Thr-122, Lys-142, Ser-144, and Ser-146 each coordinate 5-phospho-alpha-D-ribose 1-diphosphate. The Mg(2+) site is built by Asp-258 and Glu-259.

It belongs to the anthranilate phosphoribosyltransferase family. In terms of assembly, homodimer. The cofactor is Mg(2+).

The enzyme catalyses N-(5-phospho-beta-D-ribosyl)anthranilate + diphosphate = 5-phospho-alpha-D-ribose 1-diphosphate + anthranilate. Its pathway is amino-acid biosynthesis; L-tryptophan biosynthesis; L-tryptophan from chorismate: step 2/5. In terms of biological role, catalyzes the transfer of the phosphoribosyl group of 5-phosphorylribose-1-pyrophosphate (PRPP) to anthranilate to yield N-(5'-phosphoribosyl)-anthranilate (PRA), the second step in tryptophan biosynthesis. The polypeptide is Anthranilate phosphoribosyltransferase (Saccharomyces cerevisiae (strain ATCC 204508 / S288c) (Baker's yeast)).